The chain runs to 282 residues: MEMO1 family protein Msed_2139 (282 aa).

The protein belongs to the MEMO1 family.

The chain is MEMO1 family protein Msed_2139 from Metallosphaera sedula (strain ATCC 51363 / DSM 5348 / JCM 9185 / NBRC 15509 / TH2).